Here is a 262-residue protein sequence, read N- to C-terminus: Phosphatidylglycerol--prolipoprotein diacylglyceryl transferase (262 aa).

4 helical membrane-spanning segments follow: residues Leu-9–Val-29, Ile-41–Ala-61, Ile-80–Val-100, and Leu-109–Leu-129. Arg-131 is a binding site for a 1,2-diacyl-sn-glycero-3-phospho-(1'-sn-glycerol). 3 helical membrane passes run Gln-167–Phe-187, Gly-197–Met-217, and Gly-226–Ile-246.

Belongs to the Lgt family.

The protein resides in the cell membrane. It catalyses the reaction L-cysteinyl-[prolipoprotein] + a 1,2-diacyl-sn-glycero-3-phospho-(1'-sn-glycerol) = an S-1,2-diacyl-sn-glyceryl-L-cysteinyl-[prolipoprotein] + sn-glycerol 1-phosphate + H(+). The protein operates within protein modification; lipoprotein biosynthesis (diacylglyceryl transfer). In terms of biological role, catalyzes the transfer of the diacylglyceryl group from phosphatidylglycerol to the sulfhydryl group of the N-terminal cysteine of a prolipoprotein, the first step in the formation of mature lipoproteins. The polypeptide is Phosphatidylglycerol--prolipoprotein diacylglyceryl transferase (Streptococcus pneumoniae serotype 4 (strain ATCC BAA-334 / TIGR4)).